The following is a 620-amino-acid chain: Protein CNGC15b (620 aa).

Helical transmembrane passes span I73 to I93, I102 to V122, G161 to I181, F198 to I218, L237 to E257, and G356 to I376. Position 462–559 (L462–S559) interacts with a nucleoside 3',5'-cyclic phosphate.

The protein belongs to the cyclic nucleotide-gated cation channel (TC 1.A.1.5) family. As to quaternary structure, interacts (via N-terminus) with DMI1 (via c-terminus). The Nod factor has no effect on this interaction, implying that the complex is maintained after activation. In terms of tissue distribution, expressed in roots, stems, leaves, flowers and pods.

It localises to the nucleus membrane. Functionally, cyclic nucleotide-gated channel involved in the establishment of both rhizobial and mycorrhizal associations. Required for full activation of nuclear-localized Ca(2+) oscillations by Nod and Myc factors. Simultaneous activation of the K(+)-permeable channel DMI1 and the Ca(2+) channel CNGC15 can give rise to sustained Ca(2+) oscillations. May function during fertilization in both female and male gametophytic Ca(2+) signaling. This chain is Protein CNGC15b, found in Medicago truncatula (Barrel medic).